We begin with the raw amino-acid sequence, 207 residues long: Holliday junction branch migration complex subunit RuvA (207 aa).

A domain I region spans residues 1 to 65 (MYDYIRGTLT…ETEHLLYGFH (65 aa)). Residues 66-144 (SREERECFRI…DLLPLDSRVE (79 aa)) form a domain II region. Residues 145–150 (TSQTHT) form a flexible linker region. The domain III stretch occupies residues 150–207 (TTSSCLEEGIQALAALGYSKIAAERMIAEAIKDLPEGSSLTDILPIALKKNFSGVNKD).

The protein belongs to the RuvA family. In terms of assembly, homotetramer. Forms an RuvA(8)-RuvB(12)-Holliday junction (HJ) complex. HJ DNA is sandwiched between 2 RuvA tetramers; dsDNA enters through RuvA and exits via RuvB. An RuvB hexamer assembles on each DNA strand where it exits the tetramer. Each RuvB hexamer is contacted by two RuvA subunits (via domain III) on 2 adjacent RuvB subunits; this complex drives branch migration. In the full resolvosome a probable DNA-RuvA(4)-RuvB(12)-RuvC(2) complex forms which resolves the HJ.

The protein resides in the cytoplasm. Functionally, the RuvA-RuvB-RuvC complex processes Holliday junction (HJ) DNA during genetic recombination and DNA repair, while the RuvA-RuvB complex plays an important role in the rescue of blocked DNA replication forks via replication fork reversal (RFR). RuvA specifically binds to HJ cruciform DNA, conferring on it an open structure. The RuvB hexamer acts as an ATP-dependent pump, pulling dsDNA into and through the RuvAB complex. HJ branch migration allows RuvC to scan DNA until it finds its consensus sequence, where it cleaves and resolves the cruciform DNA. This chain is Holliday junction branch migration complex subunit RuvA, found in Chlamydia pneumoniae (Chlamydophila pneumoniae).